The following is a 350-amino-acid chain: Adenine deaminase (350 aa).

Residues H24, H26, and H207 each coordinate Zn(2+). Residue E210 is the Proton donor of the active site. Zn(2+) is bound at residue D288. D289 contributes to the substrate binding site.

This sequence belongs to the metallo-dependent hydrolases superfamily. Adenosine and AMP deaminases family. Adenine deaminase type 2 subfamily. Zn(2+) serves as cofactor.

The enzyme catalyses adenine + H2O + H(+) = hypoxanthine + NH4(+). Its function is as follows. Catalyzes the hydrolytic deamination of adenine to hypoxanthine. Plays an important role in the purine salvage pathway and in nitrogen catabolism. The sequence is that of Adenine deaminase from Paraburkholderia xenovorans (strain LB400).